The chain runs to 208 residues: 3-demethoxyubiquinol 3-hydroxylase (208 aa).

Fe cation is bound by residues Glu-57, Glu-87, His-90, Glu-139, Glu-171, and His-174.

Belongs to the COQ7 family. It depends on Fe cation as a cofactor.

It localises to the cell membrane. It carries out the reaction a 5-methoxy-2-methyl-3-(all-trans-polyprenyl)benzene-1,4-diol + AH2 + O2 = a 3-demethylubiquinol + A + H2O. It functions in the pathway cofactor biosynthesis; ubiquinone biosynthesis. Catalyzes the hydroxylation of 2-nonaprenyl-3-methyl-6-methoxy-1,4-benzoquinol during ubiquinone biosynthesis. This is 3-demethoxyubiquinol 3-hydroxylase from Burkholderia thailandensis (strain ATCC 700388 / DSM 13276 / CCUG 48851 / CIP 106301 / E264).